The following is a 222-amino-acid chain: Beta-amylase (222 aa).

Thr36 serves as a coordination point for substrate. The Proton acceptor role is filled by Glu74. Residues 75–76 and Arg114 each bind substrate; that span reads NA.

This sequence belongs to the glycosyl hydrolase 14 family.

It carries out the reaction Hydrolysis of (1-&gt;4)-alpha-D-glucosidic linkages in polysaccharides so as to remove successive maltose units from the non-reducing ends of the chains.. The protein is Beta-amylase (BMY1) of Secale cereale (Rye).